The following is a 386-amino-acid chain: Zinc finger CCCH domain-containing protein 39 (386 aa).

The segment at 1–90 (MDSSYSDSRP…SSSNPWMVPS (90 aa)) is disordered. Over residues 20–37 (WNQTQMIDSMANPMNNEQ) the composition is skewed to polar residues. The span at 43-58 (LSESQSQSQPSQQLQP) shows a compositional bias: low complexity. Residues 72-85 (NPASSFPQPSSSNP) are compositionally biased toward polar residues. The C3H1-type 1 zinc finger occupies 104–131 (FYKTRMCAKFRAGTCRNGELCNFAHGIE). A disordered region spans residues 136–166 (PPSNWQEIVGPPPAGQDRERERERERERERP). Positions 151 to 166 (QDRERERERERERERP) are enriched in basic and acidic residues. 2 consecutive C3H1-type zinc fingers follow at residues 183–211 (ILRM…HEDL) and 269–297 (YWKT…HGQA).

This Arabidopsis thaliana (Mouse-ear cress) protein is Zinc finger CCCH domain-containing protein 39.